The chain runs to 482 residues: Probable F-box protein At1g30780 (482 aa).

The 51-residue stretch at 230-280 folds into the F-box domain; it reads EIDLDSLPFDLKMVILTRLSAKSLTNFKRVSKMWSSIIGSQRFIDSFFTMS.

In Arabidopsis thaliana (Mouse-ear cress), this protein is Probable F-box protein At1g30780.